A 356-amino-acid polypeptide reads, in one-letter code: Methylthioribose-1-phosphate isomerase (356 aa).

Residue aspartate 234 is the Proton donor of the active site.

This sequence belongs to the eIF-2B alpha/beta/delta subunits family. MtnA subfamily.

The protein localises to the cytoplasm. The protein resides in the nucleus. It carries out the reaction 5-(methylsulfanyl)-alpha-D-ribose 1-phosphate = 5-(methylsulfanyl)-D-ribulose 1-phosphate. It functions in the pathway amino-acid biosynthesis; L-methionine biosynthesis via salvage pathway; L-methionine from S-methyl-5-thio-alpha-D-ribose 1-phosphate: step 1/6. Its function is as follows. Catalyzes the interconversion of methylthioribose-1-phosphate (MTR-1-P) into methylthioribulose-1-phosphate (MTRu-1-P). The chain is Methylthioribose-1-phosphate isomerase (mri1) from Schizosaccharomyces japonicus (strain yFS275 / FY16936) (Fission yeast).